Consider the following 204-residue polypeptide: uncharacterized protein (204 aa).

His-9 serves as the catalytic Tele-phosphohistidine intermediate. Glu-86 (proton donor/acceptor) is an active-site residue.

It belongs to the phosphoglycerate mutase family.

This is an uncharacterized protein from Acanthamoeba polyphaga (Amoeba).